The following is a 315-amino-acid chain: Acetyl-coenzyme A carboxylase carboxyl transferase subunit alpha (315 aa).

Residues 40–293 form the CoA carboxyltransferase C-terminal domain; the sequence is LEDKKIALTK…KKNVLAALDR (254 aa).

Belongs to the AccA family. As to quaternary structure, acetyl-CoA carboxylase is a heterohexamer composed of biotin carboxyl carrier protein (AccB), biotin carboxylase (AccC) and two subunits each of ACCase subunit alpha (AccA) and ACCase subunit beta (AccD).

It is found in the cytoplasm. It catalyses the reaction N(6)-carboxybiotinyl-L-lysyl-[protein] + acetyl-CoA = N(6)-biotinyl-L-lysyl-[protein] + malonyl-CoA. The protein operates within lipid metabolism; malonyl-CoA biosynthesis; malonyl-CoA from acetyl-CoA: step 1/1. In terms of biological role, component of the acetyl coenzyme A carboxylase (ACC) complex. First, biotin carboxylase catalyzes the carboxylation of biotin on its carrier protein (BCCP) and then the CO(2) group is transferred by the carboxyltransferase to acetyl-CoA to form malonyl-CoA. The polypeptide is Acetyl-coenzyme A carboxylase carboxyl transferase subunit alpha (Marinomonas sp. (strain MWYL1)).